Reading from the N-terminus, the 101-residue chain is Small ribosomal subunit protein uS14 (101 aa).

It belongs to the universal ribosomal protein uS14 family. As to quaternary structure, part of the 30S ribosomal subunit. Contacts proteins S3 and S10.

Binds 16S rRNA, required for the assembly of 30S particles and may also be responsible for determining the conformation of the 16S rRNA at the A site. This is Small ribosomal subunit protein uS14 from Blochmanniella pennsylvanica (strain BPEN).